The sequence spans 678 residues: Growth arrest-specific protein 6 (678 aa).

The first 30 residues, 1–30, serve as a signal peptide directing secretion; sequence MAPSLSPGPAALRRAPQLLLLLLAAECALA. One can recognise a Gla domain in the interval 53 to 94; that stretch reads FEEAKQGHLERECVEELCSREEAREVFENDPETDYFYPRYLD. C65 and C70 are disulfide-bonded. S71 is modified (phosphoserine; by FAM20C). Residues 116–154 enclose the EGF-like 1; calcium-binding domain; the sequence is LPDQCTPNPCDRKGTQACQDLMGNFFCLCKAGWGGRLCD. Disulfide bonds link C120–C133, C125–C142, C144–C153, C160–C171, C167–C180, C182–C195, C201–C212, C207–C221, C223–C236, C242–C251, C247–C260, C262–C277, C283–C570, and C444–C470. An EGF-like 2; calcium-binding domain is found at 156 to 196; it reads DVNECSQENGGCLQICHNKPGSFHCSCHSGFELSSDGRTCQ. Positions 197-237 constitute an EGF-like 3; calcium-binding domain; that stretch reads DIDECADSEACGEARCKNLPGSYSCLCDEGFAYSSQEKACR. The EGF-like 4; calcium-binding domain occupies 238-278; the sequence is DVDECLQGRCEQVCVNSPGSYTCHCDGRGGLKLSQDMDTCE. 2 consecutive Laminin G-like domains span residues 298-470 and 477-670; these read GRMF…RMQC and GSFY…AHSC. D329 and E331 together coordinate Ca(2+). N420 carries an N-linked (GlcNAc...) asparagine glycan. Residue R440 participates in Ca(2+) binding. T621 and T637 each carry phosphothreonine. Residue Y640 is modified to Phosphotyrosine. An intrachain disulfide couples C643 to C670. D656 serves as a coordination point for Ca(2+).

As to quaternary structure, heterodimer and heterotetramer with AXL. Proteolytically processed after secretion to yield a N-terminal 36 kDa protein and a C-terminal 50 kDa protein including the laminin G-like domains which activates AXL. In terms of processing, gamma-carboxyglutamate residues are formed by vitamin K dependent carboxylation. These residues are essential for the binding of calcium. Plasma. Isoform 1 and isoform 2 are widely expressed, isoform 1 being expressed at higher levels than isoform 2 in most tissues. Isoform 2 is the predominant form in spleen.

It is found in the secreted. Its function is as follows. Ligand for tyrosine-protein kinase receptors AXL, TYRO3 and MER whose signaling is implicated in cell growth and survival, cell adhesion and cell migration. GAS6/AXL signaling plays a role in various processes such as endothelial cell survival during acidification by preventing apoptosis, optimal cytokine signaling during human natural killer cell development, hepatic regeneration, gonadotropin-releasing hormone neuron survival and migration, platelet activation, or regulation of thrombotic responses. In terms of biological role, (Microbial infection) Can bridge virus envelope phosphatidylserine to the TAM receptor tyrosine kinase Axl to mediate viral entry by apoptotic mimicry. Plays a role in Dengue cell entry by apoptotic mimicry. Plays a role in Vaccinia virus cell entry by apoptotic mimicry. Plays a role in ebolavirus and marburgvirus cell entry by apoptotic mimicry. The protein is Growth arrest-specific protein 6 of Homo sapiens (Human).